We begin with the raw amino-acid sequence, 327 residues long: Annexin A8 (327 aa).

Annexin repeat units lie at residues 21 to 92, 93 to 164, 177 to 249, and 253 to 324; these read FNPD…ALMY, PPYR…CLLQ, GLAL…TVVK, and NVHS…NLVG. Positions 266, 268, 270, and 310 each coordinate Ca(2+).

This sequence belongs to the annexin family.

This protein is an anticoagulant protein that acts as an indirect inhibitor of the thromboplastin-specific complex, which is involved in the blood coagulation cascade. This is Annexin A8 (Anxa8) from Rattus norvegicus (Rat).